The chain runs to 484 residues: Probable cytochrome P450 316a1 (484 aa).

C433 is a binding site for heme.

The protein belongs to the cytochrome P450 family. Heme is required as a cofactor.

It localises to the endoplasmic reticulum membrane. Its subcellular location is the microsome membrane. May be involved in the metabolism of insect hormones and in the breakdown of synthetic insecticides. This chain is Probable cytochrome P450 316a1 (Cyp316a1), found in Drosophila melanogaster (Fruit fly).